The chain runs to 664 residues: DNA ligase (664 aa).

Residues 32 to 36 and 80 to 81 each bind NAD(+); these read DKEYD and SL. Residue Lys-122 is the N6-AMP-lysine intermediate of the active site. NAD(+) is bound by residues Arg-144, Glu-178, and Lys-314. Zn(2+)-binding residues include Cys-407, Cys-410, Cys-423, and Cys-429. The 78-residue stretch at 587 to 664 folds into the BRCT domain; sequence IDENPFMDKT…NEEEFSNKIK (78 aa).

This sequence belongs to the NAD-dependent DNA ligase family. LigA subfamily. Requires Mg(2+) as cofactor. Mn(2+) serves as cofactor.

It catalyses the reaction NAD(+) + (deoxyribonucleotide)n-3'-hydroxyl + 5'-phospho-(deoxyribonucleotide)m = (deoxyribonucleotide)n+m + AMP + beta-nicotinamide D-nucleotide.. DNA ligase that catalyzes the formation of phosphodiester linkages between 5'-phosphoryl and 3'-hydroxyl groups in double-stranded DNA using NAD as a coenzyme and as the energy source for the reaction. It is essential for DNA replication and repair of damaged DNA. The sequence is that of DNA ligase from Clostridium botulinum (strain Langeland / NCTC 10281 / Type F).